The sequence spans 442 residues: Protein trichome birefringence-like 26 (442 aa).

A helical; Signal-anchor for type II membrane protein membrane pass occupies residues 51–71 (FFLYFSLVALAYYFIISSLAV). The GDS motif signature appears at 164–166 (GDS). The DCXHWCLPGXXDXWN motif motif lies at 409–423 (DCLHWCLPGPIDSWN).

Belongs to the PC-esterase family. TBL subfamily.

Its subcellular location is the membrane. Its function is as follows. May be involved in the O-acetylation of mannan. May act as a bridging protein that binds pectin and other cell wall polysaccharides. Probably involved in maintaining esterification of pectins. The protein is Protein trichome birefringence-like 26 (TBL26) of Arabidopsis thaliana (Mouse-ear cress).